A 236-amino-acid chain; its full sequence is Small ribosomal subunit protein uS2c (236 aa).

It belongs to the universal ribosomal protein uS2 family.

The protein localises to the plastid. Its subcellular location is the chloroplast. This Triticum aestivum (Wheat) protein is Small ribosomal subunit protein uS2c (rps2).